The primary structure comprises 497 residues: Penton protein (497 aa).

Residues 293-295 (RGD) carry the Cell attachment site motif.

The protein belongs to the adenoviridae penton family. Interacts (via the cell attachment site RGD) with host heterodimer ITGAV-ITGB5; this interaction promotes virus internalization. Interacts with host WWP1 and WWP2. Interacts with the fiber protein (via N-terminal tail region). Interacts with the capsid vertex protein; this interaction binds the penton base to neighboring peripentonal hexons.

It is found in the virion. It localises to the host nucleus. Its function is as follows. Major capsid protein that self-associates to form penton base pentamers, each in the shape of a pentagon, situated at the 12 vertices of the pseudo T=25 capsid. Involved in virus secondary attachment to host cell after initial attachment by the fiber protein. Binds host integrin heterodimer ITGAV-ITGB5 (alphaV-beta5) thereby triggering clathrin-mediated endocytosis of virions. Mediates initial virus attachment to CXADR-negative cells. Binding to integrins ITGAV-ITGB5 also seems to induce macropinocytosis uptake of the virus. As the virus enters the host cell, penton proteins are shed concomitant with virion acidification in the endosome. The sequence is that of Penton protein from Human adenovirus A serotype 12 (HAdV-12).